Consider the following 289-residue polypeptide: tRNA-cytidine(32) 2-sulfurtransferase (289 aa).

The short motif at 49–54 (SGGKDS) is the PP-loop motif element. Residues cysteine 124, cysteine 127, and cysteine 215 each contribute to the [4Fe-4S] cluster site.

This sequence belongs to the TtcA family. In terms of assembly, homodimer. Mg(2+) serves as cofactor. The cofactor is [4Fe-4S] cluster.

It localises to the cytoplasm. The catalysed reaction is cytidine(32) in tRNA + S-sulfanyl-L-cysteinyl-[cysteine desulfurase] + AH2 + ATP = 2-thiocytidine(32) in tRNA + L-cysteinyl-[cysteine desulfurase] + A + AMP + diphosphate + H(+). The protein operates within tRNA modification. Its function is as follows. Catalyzes the ATP-dependent 2-thiolation of cytidine in position 32 of tRNA, to form 2-thiocytidine (s(2)C32). The sulfur atoms are provided by the cysteine/cysteine desulfurase (IscS) system. The protein is tRNA-cytidine(32) 2-sulfurtransferase of Methylococcus capsulatus (strain ATCC 33009 / NCIMB 11132 / Bath).